The chain runs to 230 residues: Large ribosomal subunit protein uL1 (230 aa).

It belongs to the universal ribosomal protein uL1 family. As to quaternary structure, part of the 50S ribosomal subunit.

Its function is as follows. Binds directly to 23S rRNA. The L1 stalk is quite mobile in the ribosome, and is involved in E site tRNA release. In terms of biological role, protein L1 is also a translational repressor protein, it controls the translation of the L11 operon by binding to its mRNA. The protein is Large ribosomal subunit protein uL1 of Thermoanaerobacter sp. (strain X514).